We begin with the raw amino-acid sequence, 140 residues long: Probable NADH dehydrogenase [ubiquinone] iron-sulfur protein 6, mitochondrial (140 aa).

This sequence belongs to the complex I NDUFS6 subunit family. In terms of assembly, complex I is composed of 45 different subunits. This is a component of the iron-sulfur (IP) fragment of the enzyme.

It is found in the mitochondrion inner membrane. In terms of biological role, accessory subunit of the mitochondrial membrane respiratory chain NADH dehydrogenase (Complex I), that is believed not to be involved in catalysis. Complex I functions in the transfer of electrons from NADH to the respiratory chain. The immediate electron acceptor for the enzyme is believed to be ubiquinone. This chain is Probable NADH dehydrogenase [ubiquinone] iron-sulfur protein 6, mitochondrial (nduf-6), found in Caenorhabditis elegans.